A 274-amino-acid polypeptide reads, in one-letter code: Hydroxyethylthiazole kinase (274 aa).

M54 lines the substrate pocket. Residues R129 and T175 each contribute to the ATP site. G202 contributes to the substrate binding site.

This sequence belongs to the Thz kinase family. Mg(2+) is required as a cofactor.

It catalyses the reaction 5-(2-hydroxyethyl)-4-methylthiazole + ATP = 4-methyl-5-(2-phosphooxyethyl)-thiazole + ADP + H(+). It functions in the pathway cofactor biosynthesis; thiamine diphosphate biosynthesis; 4-methyl-5-(2-phosphoethyl)-thiazole from 5-(2-hydroxyethyl)-4-methylthiazole: step 1/1. Its function is as follows. Catalyzes the phosphorylation of the hydroxyl group of 4-methyl-5-beta-hydroxyethylthiazole (THZ). The sequence is that of Hydroxyethylthiazole kinase from Granulibacter bethesdensis (strain ATCC BAA-1260 / CGDNIH1).